A 315-amino-acid polypeptide reads, in one-letter code: Methionyl-tRNA formyltransferase (315 aa).

The segment at Ser2–Asp189 is N-terminal domain. Ser113–Pro116 is a (6S)-5,6,7,8-tetrahydrofolate binding site. Positions Lys210 to Ala315 are C-terminal domain.

This sequence belongs to the Fmt family.

It catalyses the reaction L-methionyl-tRNA(fMet) + (6R)-10-formyltetrahydrofolate = N-formyl-L-methionyl-tRNA(fMet) + (6S)-5,6,7,8-tetrahydrofolate + H(+). Its function is as follows. Attaches a formyl group to the free amino group of methionyl-tRNA(fMet). The formyl group appears to play a dual role in the initiator identity of N-formylmethionyl-tRNA by promoting its recognition by IF2 and preventing the misappropriation of this tRNA by the elongation apparatus. The protein is Methionyl-tRNA formyltransferase of Salmonella choleraesuis (strain SC-B67).